The following is a 207-amino-acid chain: Large ribosomal subunit protein uL4 (207 aa).

The disordered stretch occupies residues 47–78; sequence GTHKVKNRSEVRGGGRKPWRQKGTGRARQGSI. Positions 60-71 are enriched in basic residues; that stretch reads GGRKPWRQKGTG.

This sequence belongs to the universal ribosomal protein uL4 family. In terms of assembly, part of the 50S ribosomal subunit.

Its function is as follows. One of the primary rRNA binding proteins, this protein initially binds near the 5'-end of the 23S rRNA. It is important during the early stages of 50S assembly. It makes multiple contacts with different domains of the 23S rRNA in the assembled 50S subunit and ribosome. In terms of biological role, forms part of the polypeptide exit tunnel. The sequence is that of Large ribosomal subunit protein uL4 from Listeria innocua serovar 6a (strain ATCC BAA-680 / CLIP 11262).